Reading from the N-terminus, the 32-residue chain is Calcitonin-2 (32 aa).

Cys-1 and Cys-7 are joined by a disulfide. A Proline amide modification is found at Pro-32.

The protein belongs to the calcitonin family.

The protein resides in the secreted. Functionally, causes a rapid but short-lived drop in the level of calcium and phosphate in blood by promoting the incorporation of those ions in the bones. The protein is Calcitonin-2 of Oncorhynchus gorbuscha (Pink salmon).